The primary structure comprises 303 residues: NAC domain-containing protein 48 (303 aa).

Residues 9–159 (LPPGFRFHPT…DWVLCRIYNK (151 aa)) form the NAC domain.

Interacts with NAC071. As to expression, widely expressed.

The protein localises to the nucleus. Its function is as follows. Transcription activator that binds to the promoter of the stress response gene LEA19. Involved in tolerance to abiotic stresses. Transcription activator involved in response to abiotic and biotic stresses. Involved in drought and salt stress responses, and defense response to the rice blast fungus. Transcription activator involved tolerance to cold and salt stresses. Transcription activator involved in tolerance to drought stress. Targets directly and activates genes involved in membrane modification, nicotianamine (NA) biosynthesis, glutathione relocation, accumulation of phosphoadenosine phosphosulfate and glycosylation in roots. Controls root growth at early vegetative stage through chromatin modification and histone lysine deacytaltion by HDAC1. This chain is NAC domain-containing protein 48, found in Oryza sativa subsp. japonica (Rice).